The chain runs to 91 residues: Ragulator complex protein LAMTOR5 homolog (91 aa).

Belongs to the LAMTOR5 family. As to quaternary structure, part of the Ragulator complex.

It is found in the cytoplasm. The protein localises to the lysosome. In terms of biological role, regulator of the TOR pathway, a signaling cascade that promotes cell growth in response to growth factors, energy levels, and amino acids. As part of the Ragulator complex, may activate the TOR signaling cascade in response to amino acids. The polypeptide is Ragulator complex protein LAMTOR5 homolog (Ixodes scapularis (Black-legged tick)).